A 233-amino-acid chain; its full sequence is Large ribosomal subunit protein uL1 (233 aa).

Belongs to the universal ribosomal protein uL1 family. Part of the 50S ribosomal subunit.

Its function is as follows. Binds directly to 23S rRNA. The L1 stalk is quite mobile in the ribosome, and is involved in E site tRNA release. Functionally, protein L1 is also a translational repressor protein, it controls the translation of the L11 operon by binding to its mRNA. This is Large ribosomal subunit protein uL1 from Shewanella loihica (strain ATCC BAA-1088 / PV-4).